The primary structure comprises 270 residues: Phosphatidylglycerol--prolipoprotein diacylglyceryl transferase (270 aa).

A run of 4 helical transmembrane segments spans residues 19–39 (FPVYWYGIIIGTGVLLGLWLA), 53–73 (FVDLVLFAVPIAIICARAYYV), 92–112 (QGGLAIHGGLIGAVMTGIIYA), and 117–137 (ISFWKLADIAAPSILLGQAIG). Position 138 (arginine 138) interacts with a 1,2-diacyl-sn-glycero-3-phospho-(1'-sn-glycerol). 3 consecutive transmembrane segments (helical) span residues 178 to 198 (HPTFLYESLWSFAGVILLLLL), 206 to 226 (GELFFTYLIWYSIGRFFVEEL), and 236 to 256 (LRIAQVMSIGLIVISIIFIIV).

The protein belongs to the Lgt family.

The protein localises to the cell membrane. It catalyses the reaction L-cysteinyl-[prolipoprotein] + a 1,2-diacyl-sn-glycero-3-phospho-(1'-sn-glycerol) = an S-1,2-diacyl-sn-glyceryl-L-cysteinyl-[prolipoprotein] + sn-glycerol 1-phosphate + H(+). It functions in the pathway protein modification; lipoprotein biosynthesis (diacylglyceryl transfer). Catalyzes the transfer of the diacylglyceryl group from phosphatidylglycerol to the sulfhydryl group of the N-terminal cysteine of a prolipoprotein, the first step in the formation of mature lipoproteins. The chain is Phosphatidylglycerol--prolipoprotein diacylglyceryl transferase from Bacillus cytotoxicus (strain DSM 22905 / CIP 110041 / 391-98 / NVH 391-98).